Consider the following 221-residue polypeptide: MQTPSLELKGSSFTLSVLHINQLDLEKVTIELDGKLAIAPQFFLGAPLVVNLSRIKAPDYNLAALKDLLISRQLVIVGITEAIDEIATQAKALGLANIKSGKQSNTQPQLPKTSKIVKQNVRSGQQIYAKNADLVIFGTVGNGAEVIADGSIHIYGNLRGKAMAGASGDKHAIIIARSLEAELVSIAGQYWLAENIQHNSTTKSGCVRLEGESLTIEALPL.

Belongs to the MinC family. In terms of assembly, interacts with MinD and FtsZ.

Cell division inhibitor that blocks the formation of polar Z ring septums. Rapidly oscillates between the poles of the cell to destabilize FtsZ filaments that have formed before they mature into polar Z rings. Prevents FtsZ polymerization. The sequence is that of Probable septum site-determining protein MinC from Shewanella woodyi (strain ATCC 51908 / MS32).